Here is a 140-residue protein sequence, read N- to C-terminus: Large-conductance mechanosensitive channel (140 aa).

Transmembrane regions (helical) follow at residues 21–41 and 82–102; these read VGVIIGGAFGKIVESLVGDVI and GSFITVAINFMILAFIIFMMI.

Belongs to the MscL family. Homopentamer.

It localises to the cell inner membrane. Functionally, channel that opens in response to stretch forces in the membrane lipid bilayer. May participate in the regulation of osmotic pressure changes within the cell. This Leptothrix cholodnii (strain ATCC 51168 / LMG 8142 / SP-6) (Leptothrix discophora (strain SP-6)) protein is Large-conductance mechanosensitive channel.